The primary structure comprises 310 residues: Probable metallo-hydrolase Mb2322c (310 aa).

The segment at 1 to 29 (MVATRGRPCPTNFSRPQRPRVAGNGTKSQ) is disordered. The Zn(2+) site is built by H137, D139, D141, H142, H221, D242, and H288.

Belongs to the metallo-beta-lactamase superfamily. The cofactor is Zn(2+).

The chain is Probable metallo-hydrolase Mb2322c from Mycobacterium bovis (strain ATCC BAA-935 / AF2122/97).